The primary structure comprises 268 residues: N-formylmaleamate deformylase (268 aa).

Positions 28-251 constitute an AB hydrolase-1 domain; that stretch reads ALILVPGITS…NAGHMIPWDD (224 aa). Catalysis depends on charge relay system residues S101, E221, and H245.

The catalysed reaction is N-formylmaleamate + H2O = maleamate + formate + H(+). The protein operates within cofactor degradation; nicotinate degradation. In terms of biological role, deformylase that catalyzes the conversion of N-formylmaleamic acid to maleamate in the aerobic nicotinate degradation pathway. In Pseudomonas putida (strain ATCC 47054 / DSM 6125 / CFBP 8728 / NCIMB 11950 / KT2440), this protein is N-formylmaleamate deformylase (nicD).